Here is a 327-residue protein sequence, read N- to C-terminus: Putative D-threonate 4-phosphate dehydrogenase (327 aa).

Substrate-binding residues include H139 and T140. Positions 169, 213, and 268 each coordinate a divalent metal cation. 3 residues coordinate substrate: K276, N285, and R294.

The protein belongs to the PdxA family. PdxA2 subfamily. In terms of assembly, homodimer. It depends on a divalent metal cation as a cofactor.

The catalysed reaction is 4-O-phospho-D-threonate + NAD(+) = dihydroxyacetone phosphate + CO2 + NADH. Its function is as follows. Catalyzes the NAD-dependent oxidation and subsequent decarboxylation of D-threonate 4-phosphate to produce dihydroxyacetone phosphate (DHAP). This Salmonella typhi protein is Putative D-threonate 4-phosphate dehydrogenase.